The primary structure comprises 556 residues: Polypeptide N-acetylgalactosaminyltransferase 13 (556 aa).

The Cytoplasmic segment spans residues 1–4; the sequence is MRRL. The chain crosses the membrane as a helical; Signal-anchor for type II membrane protein span at residues 5 to 27; the sequence is VYCKVVLATSLMWVLVDVFLLLY. Residues 28 to 556 lie on the Lumenal side of the membrane; it reads FSECNKCDDK…WLLRNMTLGT (529 aa). 2 N-linked (GlcNAc...) asparagine glycosylation sites follow: Asn-94 and Asn-116. Intrachain disulfides connect Cys-105-Cys-338, Cys-329-Cys-407, Cys-441-Cys-458, Cys-481-Cys-496, and Cys-522-Cys-539. The interval 114–224 is catalytic subdomain A; sequence LPNTSVVIVF…LGWLEPLLAR (111 aa). Residues Asp-155 and Arg-185 each coordinate substrate. The Mn(2+) site is built by Asp-208 and His-210. The interval 284–346 is catalytic subdomain B; it reads PVRTPTMAGG…TCSHVGHVFR (63 aa). Trp-315 lines the substrate pocket. His-343 serves as a coordination point for Mn(2+). Substrate is bound by residues Arg-346 and Tyr-351. Positions 428-550 constitute a Ricin B-type lectin domain; the sequence is YSLGEIRNVE…GSRSQQWLLR (123 aa). The N-linked (GlcNAc...) asparagine glycan is linked to Asn-551.

This sequence belongs to the glycosyltransferase 2 family. GalNAc-T subfamily. Mn(2+) serves as cofactor.

Its subcellular location is the golgi apparatus membrane. The enzyme catalyses L-seryl-[protein] + UDP-N-acetyl-alpha-D-galactosamine = a 3-O-[N-acetyl-alpha-D-galactosaminyl]-L-seryl-[protein] + UDP + H(+). It catalyses the reaction L-threonyl-[protein] + UDP-N-acetyl-alpha-D-galactosamine = a 3-O-[N-acetyl-alpha-D-galactosaminyl]-L-threonyl-[protein] + UDP + H(+). It participates in protein modification; protein glycosylation. Functionally, catalyzes the initial reaction in O-linked oligosaccharide biosynthesis, the transfer of an N-acetyl-D-galactosamine (GalNAc) residue from UDP-GalNAc to a serine or threonine residue on the protein receptor. Generates GalNAc-O-Ser/Thr structure also known as Tn antigen, which itself is immunogenic but also serves as a precursor for the synthesis of different mucin-type O-glycan core structures. Contributes to the synthesis of O-linked glycans on mucins and proteoglycans of the central nervous system. Can glycosylate both unmodified peptides and glycopeptides that already contain an O-linked GalNAc sugar. Transfers GalNAc to Thr-/Ser-rich tandem repeats GTTPSPVPTTSTTSAP of MUC5AC. Transfers GalNAc to three consecutive serine/threonine residues on SDC3 forming a triplet-Tn epitope expressed in Purkinje cells of the developing brain. May promote neurogenesis through glycosylation and stabilization of PDPN. This Rattus norvegicus (Rat) protein is Polypeptide N-acetylgalactosaminyltransferase 13 (Galnt13).